A 389-amino-acid chain; its full sequence is Alanine racemase (389 aa).

Catalysis depends on K48, which acts as the Proton acceptor; specific for D-alanine. K48 carries the post-translational modification N6-(pyridoxal phosphate)lysine. Substrate is bound at residue R144. Residue Y281 is the Proton acceptor; specific for L-alanine of the active site. Residue M329 coordinates substrate.

This sequence belongs to the alanine racemase family. The cofactor is pyridoxal 5'-phosphate.

It carries out the reaction L-alanine = D-alanine. It participates in amino-acid biosynthesis; D-alanine biosynthesis; D-alanine from L-alanine: step 1/1. Catalyzes the interconversion of L-alanine and D-alanine. May also act on other amino acids. The sequence is that of Alanine racemase (alr) from Leptospira interrogans serogroup Icterohaemorrhagiae serovar copenhageni (strain Fiocruz L1-130).